Reading from the N-terminus, the 206-residue chain is 3-isopropylmalate dehydratase small subunit (206 aa).

It belongs to the LeuD family. LeuD type 1 subfamily. In terms of assembly, heterodimer of LeuC and LeuD.

It carries out the reaction (2R,3S)-3-isopropylmalate = (2S)-2-isopropylmalate. Its pathway is amino-acid biosynthesis; L-leucine biosynthesis; L-leucine from 3-methyl-2-oxobutanoate: step 2/4. Functionally, catalyzes the isomerization between 2-isopropylmalate and 3-isopropylmalate, via the formation of 2-isopropylmaleate. The chain is 3-isopropylmalate dehydratase small subunit from Acidobacterium capsulatum (strain ATCC 51196 / DSM 11244 / BCRC 80197 / JCM 7670 / NBRC 15755 / NCIMB 13165 / 161).